Reading from the N-terminus, the 510-residue chain is P-(S)-hydroxymandelonitrile lyase (510 aa).

Positions 1-34 (MAVFISSSGSPGRATATTTTTTTLLLAVLAAAAA) are cleaved as a signal peptide. Position 116–118 (116–118 (NGG)) interacts with substrate. Cystine bridges form between C121–C377, C277–C289, and C313–C344. N172 carries an N-linked (GlcNAc...) asparagine glycan. Residue 212–213 (ES) coordinates substrate. S213 is an active-site residue. An N-linked (GlcNAc...) asparagine glycan is attached at N365. Residues D414 and H469 contribute to the active site. Substrate is bound at residue 465 to 469 (SGAGH).

This sequence belongs to the peptidase S10 family. In terms of assembly, heterotetramer of two A and two B chains. The A and B chains are linked by a disulfide bond. Post-translationally, the N-terminus of chain A is blocked. Primary leaves of seedlings.

It carries out the reaction (S)-4-hydroxymandelonitrile = 4-hydroxybenzaldehyde + hydrogen cyanide. In terms of biological role, involved in cyanogenesis, the release of HCN from injured tissues. Is involved in the catabolism of the cyanogenic glycoside dhurrin. The chain is P-(S)-hydroxymandelonitrile lyase from Sorghum bicolor (Sorghum).